A 653-amino-acid chain; its full sequence is Sodium-dependent phosphate transporter 2 (653 aa).

A topological domain (extracellular) is located at residue Met1. The helical transmembrane segment at 2–22 threads the bilayer; sequence VLVEYLWMVIVGFIIAFILAF. The Cytoplasmic portion of the chain corresponds to 23-46; it reads SVGANDVANSFGTAVGSGVVTLRQ. The helical transmembrane segment at 47 to 67 threads the bilayer; sequence ACILASIFETTGSVLLGAKVG. Topologically, residues 68–86 are extracellular; that stretch reads ETIRKGIIDVNLYNNTVDL. An N-linked (GlcNAc...) asparagine glycan is attached at Asn81. The helical transmembrane segment at 87–107 threads the bilayer; the sequence is LMAGEVSAMVGSAVWQLIASF. Residues 108–109 are Cytoplasmic-facing; that stretch reads LR. The helical transmembrane segment at 110-130 threads the bilayer; it reads LPISGTHCIVGATIGFSLVAI. The Extracellular segment spans residues 131–142; the sequence is GTHGVQWMQLVK. A helical transmembrane segment spans residues 143–163; sequence IVASWFISPLLSGLMSGALFL. Topologically, residues 164–187 are cytoplasmic; sequence MIKFFILKKEDPVPNGLKALPVFY. Residues 188–208 form a helical membrane-spanning segment; that stretch reads AATIGINVFSILYTGAPLLGL. The Extracellular segment spans residues 209 to 217; the sequence is ESFPVWATA. A helical membrane pass occupies residues 218-238; sequence LLSIGIAIIFALIVWFFVCPW. At 239–483 the chain is on the cytoplasmic side; it reads MKKKIASRLK…EDKEEKDKSE (245 aa). The chain crosses the membrane as a helical span at residues 484–504; the sequence is VHLLFHFLQILTACFGSFAHG. Residues 505-532 are Extracellular-facing; that stretch reads GNDVSNAIGPLVALWLIYEQGGVMQEAS. The helical transmembrane segment at 533 to 553 threads the bilayer; that stretch reads TPVWLLLYGGVGICAGLWVWG. At 554-572 the chain is on the cytoplasmic side; sequence RRVIQTMGKDLTPITPSSG. The chain crosses the membrane as a helical span at residues 573 to 587; the sequence is FTIELASAFTVVVAS. Topologically, residues 588–594 are extracellular; sequence NIGLPIS. A helical transmembrane segment spans residues 595–610; the sequence is TTHCKVGSVVAVGWIR. Residues 611–622 are Cytoplasmic-facing; that stretch reads SRKAVDWRLFRN. The helical transmembrane segment at 623–643 threads the bilayer; sequence IFLAWFVTVPVAGLFSAGVMA. The Extracellular portion of the chain corresponds to 644-653; the sequence is ILQYGILPYV.

It belongs to the inorganic phosphate transporter (PiT) (TC 2.A.20) family. As to quaternary structure, homodimer.

It localises to the cell membrane. The protein localises to the apical cell membrane. It catalyses the reaction 2 Na(+)(out) + phosphate(out) = 2 Na(+)(in) + phosphate(in). Its function is as follows. Sodium-phosphate symporter which preferentially transports the monovalent form of phosphate with a stoichiometry of two sodium ions per phosphate ion. The polypeptide is Sodium-dependent phosphate transporter 2 (slc20a2) (Xenopus tropicalis (Western clawed frog)).